We begin with the raw amino-acid sequence, 368 residues long: DNA-directed RNA polymerase II subunit GRINL1A (368 aa).

The important for transcription repressor activity stretch occupies residues 29-68 (KRQERLLRNEKFICKLPDKGKKIFDSFAKLKAAIAECEEV). 3 stretches are compositionally biased toward polar residues: residues 116 to 131 (SSVD…QNQG), 205 to 224 (GEQQ…LSSG), and 258 to 273 (QNDS…SPIS). 3 disordered regions span residues 116-186 (SSVD…DTSS), 203-227 (DQGE…GTEK), and 255-282 (PFRQ…RRDK). Residues 227-298 (KKPHYMEVLE…TAARLLPLHH (72 aa)) are interaction with Pol II. Position 270 is a phosphoserine (Ser270). Positions 299–314 (MPTQLLSIEESLALQK) are important for transcription repressor activity. A coiled-coil region spans residues 301 to 335 (TQLLSIEESLALQKQQKQNYEEMQAKLAAQKLAER). Positions 315-340 (QQKQNYEEMQAKLAAQKLAERLNIKM) are interaction with Pol II. The disordered stretch occupies residues 339 to 368 (KMRSYNPEGESSGRYREVRDEDDDWSSDEF). The span at 358–368 (DEDDDWSSDEF) shows a compositional bias: acidic residues.

This sequence belongs to the GRINL1 family. Component of the Pol II(G) complex, which contains the RNA polymerase II (Pol II) core complex subunits and POLR2M isoform 1. Pol II(G) appears to be an abundant form of Pol II. Dephosphorylated at Ser-270 by the PNUTS-PP1 complex, promoting RNA polymerase II transcription pause-release. As to expression, detected in adult an fetal brain. Detected in heart, kidney, skeletal muscle, small intestine, lung, prostate and testis.

The protein resides in the nucleus. In terms of biological role, appears to be a stable component of the Pol II(G) complex form of RNA polymerase II (Pol II). Pol II synthesizes mRNA precursors and many functional non-coding RNAs and is the central component of the basal RNA polymerase II transcription machinery. May play a role in the Mediator complex-dependent regulation of transcription activation. Acts as a negative regulator of transcriptional activation; this repression is relieved by the Mediator complex, which restores Pol II(G) activator-dependent transcription to a level equivalent to that of Pol II. The sequence is that of DNA-directed RNA polymerase II subunit GRINL1A (POLR2M) from Homo sapiens (Human).